Here is a 505-residue protein sequence, read N- to C-terminus: MAKPILLSIYLCLIIVALFNGCLAQSGGRQQHKFGQCQLNRLDALEPTNRIEAEAGVIESWDPNHQQLQCAGVAVVRRTIEPNGLLLPHYSNAPQLVYIARGRGITGVLFPGCPETFEESQRQSQQGQRREFQQDRHQKIRHFREGDIIAFPAGVAHWCYNDGSSPVVAIFLLDTHNNANQLDQNPRNFYLAGNPDDEFRPQGQQEYEQHRRQQQHQQRRGEHGEQQRDLGNNVFSGFDAEFLADAFNVDTETARRLQSENDHRGSIVRVEGRQLQVIRPRWSREEQEHEERKERERERESESERRQSRRGGRDDNGLEETICTLSLRENIGDPSRADIYTEEAGRISTVNSHNLPILRWLQLSAERGALYSDALYVPHWNLNAHSVVYALRGRAEVQVVDNFGQTVFDDELREGQLLTIPQNFAVVKRARDEGFEWVSFKTNENAMVSPLAGRTSAIRALPEEVLVNAFQIPREDARRLKFNRQESTLVRSRSRSSRSERRAEV.

A signal peptide spans Met-1–Ala-24. Cystine bridges form between Cys-37–Cys-70 and Cys-113–Cys-323. The region spanning Leu-42–Arg-255 is the Cupin type-1 1 domain. 3 igE-binding regions span residues Glu-118–Phe-132, Glu-208–Arg-219, and Phe-238–Val-249. Residues Gly-193–Asn-232 are disordered. Basic and acidic residues predominate over residues Arg-219 to Arg-228. Over residues Trp-282 to Asn-316 the composition is skewed to basic and acidic residues. The tract at residues Trp-282–Leu-318 is disordered. The short motif at Asn-316–Thr-321 is the NGXEET; peptidase recognition motif element. In terms of domain architecture, Cupin type-1 2 spans Glu-329–Arg-478.

It belongs to the 11S seed storage protein (globulins) family. Homohexamer. Each subunit is composed of an acidic and a basic chain derived from a single precursor and linked by a disulfide bond. In terms of tissue distribution, expressed in seeds (at protein level). Expressed in seeds.

In terms of biological role, seed storage protein. This is 11S globulin seed storage protein 1 from Carya illinoinensis (Pecan).